Consider the following 429-residue polypeptide: MQRAGAGARRASDCGPAPYRPRCIAKLAQYVGSFPVDDLDTQESVGLVQQQLWALQDCSRRRAVILKFSLQGLKIYSGEGEVLLMAHALKRILYATWYPAACQFAFIARNPRSPSSKLFCHLFVGSQPGEVHILYLLLCRSFQLAYLLQHPEERAQSEPCLAPVGDLSLKPLCSPGVPPALVREPFSRDQLSQNVHALVSFRRLPAEGLLGSNGKELPESEGRGGTRHIRLGNPYCSPTLVRKKAIRSKVIRSGAYRGCTYETQLQLSAREAFPAAWEAWPRGPGGPSCLVENEGSLTENIWAFAGLSRSCALSLLRRDVHGAFLLWPEPGTSDQWSLSVRTQCGVVPHQVFRNHLGRFCLEHLPAEFPSLEALVESHAGVERSLFCPLSMGRLNPTYEEQDCGTEGRFPRTLRPLSHAKSEAELQGLG.

One can recognise an SH2 domain in the interval 302–398 (WAFAGLSRSC…LSMGRLNPTY (97 aa)).

In terms of assembly, interacts with BCR. As to expression, highly expressed in brain, particularly in Purkinjie cells in the cerebellum and the cornu ammonis of the hippocampus.

The protein localises to the postsynaptic density. Functionally, may be involved in synaptic plasticity regulation through the control of Rac-GTP levels. The polypeptide is SH2 domain-containing protein 5 (Mus musculus (Mouse)).